The following is a 198-amino-acid chain: Endothelin-3 (198 aa).

Residues 1–16 (MEPGLWLLFGLTVTSA) form the signal peptide. A propeptide spanning residues 17–86 (AGLVPCPQPG…SKGGPVHGRA (70 aa)) is cleaved from the precursor. The interval 22–79 (CPQPGDAGKSGVPGTPPTARSEGDIQEPVAMTAVQGPSPRSPEQEQELGRFGEQASKG) is disordered. Cystine bridges form between C89-C103 and C91-C99. Positions 110–198 (INTPEQTVPY…RGNGGLRPTR (89 aa)) are excised as a propeptide. Residues 150–164 (CACVQSQDSACLHFC) form an endothelin-like region. Residues 174–198 (SRTATNPDKEEEPASRGNGGLRPTR) form a disordered region.

It belongs to the endothelin/sarafotoxin family. In terms of tissue distribution, expressed in which included heart, lung, liver, kidney, spleen, stomach, pancreas, duodenum, colon, uterus, ovary and testis.

The protein resides in the secreted. In terms of biological role, endothelins are endothelium-derived vasoconstrictor peptides. This chain is Endothelin-3 (EDN3), found in Canis lupus familiaris (Dog).